The following is a 542-amino-acid chain: Major facilitator superfamily transporter mfsA (542 aa).

11 consecutive transmembrane segments (helical) span residues 19–39 (FAAVVGFSLFGYNQGMMAGLL), 70–90 (GAVTSCYELGCFFGALFSMFC), 99–119 (LIFMGASILIVGALLTTVCYT), 127–149 (FVIGRVVSGIGNGMNTATIPVWQ), 160–180 (FLVCFEGAMIAGGTFIAYWVV), 194–214 (FPVALQIFFALVVATGALMLP), 321–341 (IMGGVFASVYALATIPSFFMI), 349–369 (LYLIGFLGQGLSFVITFACLI), 380–400 (AVGIFLFITFFAFTLLPLPWI), 413–432 (VGASASTCTNWMCNFAVVMF), and 444–464 (VYLFFALFNFVGLIFGYFFYV).

It belongs to the major facilitator superfamily. Sugar transporter (TC 2.A.1.1) family.

It localises to the membrane. Its function is as follows. Major facilitator superfamily transporter that may be involved in A.fumigatus adaptation to azoles such as vorizonazole. This is Major facilitator superfamily transporter mfsA from Aspergillus fumigatus (strain ATCC MYA-4609 / CBS 101355 / FGSC A1100 / Af293) (Neosartorya fumigata).